The following is a 272-amino-acid chain: 1,4-dihydroxy-2-naphthoyl-CoA synthase (272 aa).

Residues Arg-33, 72–76, Tyr-84, 116–120, Thr-142, Ser-148, Tyr-245, and Lys-260 contribute to the substrate site; these read SGGDQ and YAIGG. 141 to 143 lines the hydrogencarbonate pocket; sequence QTG. Basic and acidic residues predominate over residues 253 to 264; sequence GRDAFKEKRDPD. The disordered stretch occupies residues 253–272; the sequence is GRDAFKEKRDPDFDQFPKFP.

Belongs to the enoyl-CoA hydratase/isomerase family. MenB subfamily. The cofactor is hydrogencarbonate.

It carries out the reaction 2-succinylbenzoyl-CoA + H(+) = 1,4-dihydroxy-2-naphthoyl-CoA + H2O. It functions in the pathway quinol/quinone metabolism; 1,4-dihydroxy-2-naphthoate biosynthesis; 1,4-dihydroxy-2-naphthoate from chorismate: step 6/7. The protein operates within quinol/quinone metabolism; menaquinone biosynthesis. Converts o-succinylbenzoyl-CoA (OSB-CoA) to 1,4-dihydroxy-2-naphthoyl-CoA (DHNA-CoA). In Staphylococcus saprophyticus subsp. saprophyticus (strain ATCC 15305 / DSM 20229 / NCIMB 8711 / NCTC 7292 / S-41), this protein is 1,4-dihydroxy-2-naphthoyl-CoA synthase.